The primary structure comprises 218 residues: Small ribosomal subunit protein uS3c (218 aa).

Residues V47–S118 enclose the KH type-2 domain.

This sequence belongs to the universal ribosomal protein uS3 family. As to quaternary structure, part of the 30S ribosomal subunit.

Its subcellular location is the plastid. It localises to the chloroplast. In Aethionema cordifolium (Lebanon stonecress), this protein is Small ribosomal subunit protein uS3c (rps3).